The primary structure comprises 659 residues: MPGSANWTADRFYIPDTLANWPWPRAINPAYEECKAASAAWCEKYGAFSARAQKAFNLCDFNLLASLAYAGLPADVNRVGCDLMNLFFVVDEHTDAMDARSVQDWVDIVVDALHHPHTPRPAGEPKVGEIARTFWENGIKCMGPTAQRRFVETFTTYLQSVVTQAQDRDKHLFRDVDSYMEVRRDTIGAKPSFALLEHDMELPDDVFYHPLLEKLREWAIDMLILGNDLCSYNVEQSRGDDGHNIIRLAMLQENTNVHGALRFVSKMHDDLAEKFLSNYQGMPSFTPQIDAWVTRYIDGLGNWVRANDSWSFESWRYFKGDVLRVQAERWVELLPPAPKDELTSSIPPESRWIKPAVEPSRARPNNVGIVALDTYTPTSEDDFQTLAVKTVSSLLSKYNINPVSVGRLDICIERAADPYIIYALRDAFASAGNTDVEAIVSSSKSVVGLFNAINWVESSSWDGRYAIVFAGDLSSGVSAALVGPDAPIVVEPTRGTYLGDPIASTDEAQGSYIDSLFQSYSHYRKKHPQFSKTSGAPNGAHTPTTTNGSIKSNGFVSGDTNGHANGNGHVQTRSSTPSSSSSSTSSPSFDYMILHDRHGKIPTGAGSIYLGLASLITDIAPETLAGKSIGVFGFANSTSTFFGIRVAGDCSVICKQLQA.

Mg(2+)-binding residues include Asp91, Asn227, Ser231, and Glu235. The short motif at 91 to 95 (DEHTD) is the DDXXD motif element. (2E,6E)-farnesyl diphosphate is bound by residues Arg316 and Tyr317. Positions 528–586 (PQFSKTSGAPNGAHTPTTTNGSIKSNGFVSGDTNGHANGNGHVQTRSSTPSSSSSSTSS) are disordered. Positions 530–573 (FSKTSGAPNGAHTPTTTNGSIKSNGFVSGDTNGHANGNGHVQTR) are enriched in polar residues. Residues 574 to 586 (SSTPSSSSSSTSS) show a composition bias toward low complexity.

The protein belongs to the terpene synthase family. Mg(2+) is required as a cofactor.

The catalysed reaction is (2E,6E)-farnesyl diphosphate = Delta(6)-protoilludene + diphosphate. In terms of biological role, terpene cyclase that catalyzes the cyclization of farnesyl diphosphate (FPP) to delta(6)-protoilludene. In Cyclocybe aegerita (Black poplar mushroom), this protein is Delta(6)-protoilludene synthase.